A 777-amino-acid polypeptide reads, in one-letter code: Probable aconitate hydratase, mitochondrial (777 aa).

A mitochondrion-targeting transit peptide spans 1 to 26 (MNSLLRLSHLAGPAHYRALHSSSSIW). Residues Q96 and 189–191 (DSH) each bind substrate. [4Fe-4S] cluster contacts are provided by C382, C445, and C448. 2 residues coordinate substrate: R471 and R476. The disordered stretch occupies residues 534–555 (YDPGEDTFQAPSGSGQVDVSPS). Residues 542–555 (QAPSGSGQVDVSPS) show a composition bias toward polar residues. Substrate-binding positions include R601 and 664–665 (SR).

Belongs to the aconitase/IPM isomerase family. As to quaternary structure, monomer. [4Fe-4S] cluster serves as cofactor.

It is found in the mitochondrion. The enzyme catalyses citrate = D-threo-isocitrate. It participates in carbohydrate metabolism; tricarboxylic acid cycle; isocitrate from oxaloacetate: step 2/2. Functionally, catalyzes the isomerization of citrate to isocitrate via cis-aconitate. This chain is Probable aconitate hydratase, mitochondrial, found in Caenorhabditis elegans.